The chain runs to 137 residues: MAPKAADKKPASKAPATASKAPEKKDAGKKTAASGDKKKRSKSRKETYSSYIYKVLKQVHPDTGISNRAMSILNSFVNDIFERVASEASKLAAYNKKSTISSREIQTSVRLILPGELAKHAVSEGTKAVTKYSSSTK.

Positions 1–10 are enriched in basic and acidic residues; it reads MAPKAADKKP. Residues 1 to 46 are disordered; the sequence is MAPKAADKKPASKAPATASKAPEKKDAGKKTAASGDKKKRSKSRKE. 2 positions are modified to N6-acetyllysine; alternate: Lys8 and Lys9. Residues Lys8 and Lys9 each participate in a glycyl lysine isopeptide (Lys-Gly) (interchain with G-Cter in SUMO); alternate cross-link. Position 12 is a phosphoserine (Ser12). Residue Lys13 is modified to N6-acetyllysine. N6-acetyllysine; alternate is present on Lys24. Lys24 is covalently cross-linked (Glycyl lysine isopeptide (Lys-Gly) (interchain with G-Cter in SUMO); alternate). Lys25 participates in a covalent cross-link: Glycyl lysine isopeptide (Lys-Gly) (interchain with G-Cter in SUMO). Residue Lys131 forms a Glycyl lysine isopeptide (Lys-Gly) (interchain with G-Cter in ubiquitin) linkage.

It belongs to the histone H2B family. The nucleosome is a histone octamer containing two molecules each of H2A, H2B, H3 and H4 assembled in one H3-H4 heterotetramer and two H2A-H2B heterodimers. The octamer wraps approximately 147 bp of DNA. In terms of processing, monoubiquitinated by the UBC2-BRE1 complex to form H2BK123ub1. H2BK123ub1 gives a specific tag for epigenetic transcriptional activation and is also prerequisite for H3K4me and H3K79me formation. H2BK123ub1 also modulates the formation of double-strand breaks during meiosis and is a prerequisite for DNA-damage checkpoint activation. Post-translationally, phosphorylated to form H2BS10ph during progression through meiotic prophase. May be correlated with chromosome condensation. Acetylated by GCN5 to form H2BK11ac and H2BK16ac. H2BK16ac can also be formed by ESA1. Acetylation of N-terminal lysines and particularly formation of H2BK11acK16ac has a positive effect on transcription. In terms of processing, sumoylation to form H2BK6su or H2BK7su, and probably also H2BK16su or H2BK17su, occurs preferentially near the telomeres and represses gene transcription.

It localises to the nucleus. Its subcellular location is the chromosome. Functionally, core component of nucleosome. Nucleosomes wrap and compact DNA into chromatin, limiting DNA accessibility to the cellular machineries which require DNA as a template. Histones thereby play a central role in transcription regulation, DNA repair, DNA replication and chromosomal stability. DNA accessibility is regulated via a complex set of post-translational modifications of histones, also called histone code, and nucleosome remodeling. This is Histone H2B (HTB1) from Gibberella zeae (strain ATCC MYA-4620 / CBS 123657 / FGSC 9075 / NRRL 31084 / PH-1) (Wheat head blight fungus).